Reading from the N-terminus, the 784-residue chain is MQPKVLHTLEFDKVKEQLAEHASSPLGLEKIDALMPSSDLEEVAAWLDETDEAAAVLRLAGYVPLDGVVDIRPHLKRAAIGGTLSPQELLEVAATSAASRQMKRLIAGLYDEHGGLERLFRYADTLAEAPELEHDVRRSIDDHGEVLDAASDRLRSLRGQIRSVEARIREKLESIIRSPSAQKRLSDAIITIRNDRYVIPVKQEYRGAYGGIVHDQSASGATLFIEPQAVVELNNALREARAKEKQEIERILRELSAKVAEQAEPLARTVEALAALDFAFAKAKYARRLQAAKPAVNSRGYLRFLQARHPLLDQEKAVPNDIELGGDYTTIVITGPNTGGKTVTLKTIGLLTLMAQAGLFIPAADGSEAAVFRSVFADIGDEQSIEQSLSTFSSHMVNIVDILRHVDGESLVLFDELGAGTDPQEGAALAIAILDEVHGRGARTVATTHYPELKAYGYNRPGVVNASVEFDTETLRPTYKLLIGIPGRSNAFDISRRLGLDERIIERAKAQVSAESHNVENMIASLERSKKQAEEDEARARAALEEAERLRAEWEQKWEELEEEKAERLAEATQKAADIIRAAEREAERIIQELRRLQKEKQAEVKEHELVEAKQRLAAAMPKVEKRKKAKKAASRHVFQPGDEVKVTSLNQKGYLIEKVSDDEWQVQLGILKMKIHERDLEYIGSAPAKDVTPIATVKGKDAHVSLELDLRGERYEDALIRLEKYLDDAVLAGYARVSIIHGKGTGALRQGVQQFLKQHRAVKSFRFGEANEGGTGVTIVELK.

Glycine 335–threonine 342 serves as a coordination point for ATP. A Smr domain is found at leucine 709 to lysine 784.

This sequence belongs to the DNA mismatch repair MutS family. MutS2 subfamily. As to quaternary structure, homodimer. Binds to stalled ribosomes, contacting rRNA.

In terms of biological role, endonuclease that is involved in the suppression of homologous recombination and thus may have a key role in the control of bacterial genetic diversity. Functionally, acts as a ribosome collision sensor, splitting the ribosome into its 2 subunits. Detects stalled/collided 70S ribosomes which it binds and splits by an ATP-hydrolysis driven conformational change. Acts upstream of the ribosome quality control system (RQC), a ribosome-associated complex that mediates the extraction of incompletely synthesized nascent chains from stalled ribosomes and their subsequent degradation. Probably generates substrates for RQC. The chain is Endonuclease MutS2 from Geobacillus kaustophilus (strain HTA426).